The sequence spans 153 residues: UPF0756 membrane protein LCA_1031 (153 aa).

4 consecutive transmembrane segments (helical) span residues 4-24, 52-72, 85-105, and 115-135; these read WLFL…SLII, WGVT…QIGF, FIAV…VGLL, and LVFG…GPVI.

It belongs to the UPF0756 family.

It localises to the cell membrane. The polypeptide is UPF0756 membrane protein LCA_1031 (Latilactobacillus sakei subsp. sakei (strain 23K) (Lactobacillus sakei subsp. sakei)).